A 219-amino-acid chain; its full sequence is 23.6 kDa heat shock protein, mitochondrial (219 aa).

The transit peptide at 1-29 (MALARQCLSKRLAAGCALARPLHAASPVA) directs the protein to the mitochondrion. One can recognise a sHSP domain in the interval 104-219 (QVAETLTRPL…KRSVTEVKVR (116 aa)).

Belongs to the small heat shock protein (HSP20) family. In terms of assembly, may form oligomeric structures.

The protein resides in the mitochondrion. The polypeptide is 23.6 kDa heat shock protein, mitochondrial (HSP23.6) (Oryza sativa subsp. japonica (Rice)).